A 169-amino-acid polypeptide reads, in one-letter code: MAKHKIDYTRENGLPVVLTTIDKLVNWGRSNSLWAMNYGLACCAIEMMATGASRYDFDRFGTIFRASAKQSEVMVIAGTLSKKHAELARRLYDAMPEPKWVISMGSCANTGGMFNTYAVVQGCDRIIPVDIYLPGCAPRPETLQYALMILQKKIRREKANRNQLPKRLV.

Residues C42, C43, C107, and C136 each coordinate [4Fe-4S] cluster.

This sequence belongs to the complex I 20 kDa subunit family. As to quaternary structure, NDH-1 is composed of 14 different subunits. Subunits NuoB, C, D, E, F, and G constitute the peripheral sector of the complex. Requires [4Fe-4S] cluster as cofactor.

The protein resides in the cell inner membrane. The enzyme catalyses a quinone + NADH + 5 H(+)(in) = a quinol + NAD(+) + 4 H(+)(out). Its function is as follows. NDH-1 shuttles electrons from NADH, via FMN and iron-sulfur (Fe-S) centers, to quinones in the respiratory chain. Couples the redox reaction to proton translocation (for every two electrons transferred, four hydrogen ions are translocated across the cytoplasmic membrane), and thus conserves the redox energy in a proton gradient. The polypeptide is NADH-quinone oxidoreductase subunit B (Campylobacter hominis (strain ATCC BAA-381 / DSM 21671 / CCUG 45161 / LMG 19568 / NCTC 13146 / CH001A)).